A 177-amino-acid chain; its full sequence is Large ribosomal subunit protein uL6 (177 aa).

It belongs to the universal ribosomal protein uL6 family. In terms of assembly, part of the 50S ribosomal subunit.

This protein binds to the 23S rRNA, and is important in its secondary structure. It is located near the subunit interface in the base of the L7/L12 stalk, and near the tRNA binding site of the peptidyltransferase center. The polypeptide is Large ribosomal subunit protein uL6 (Bordetella pertussis (strain Tohama I / ATCC BAA-589 / NCTC 13251)).